Here is a 427-residue protein sequence, read N- to C-terminus: 3-phosphoshikimate 1-carboxyvinyltransferase (427 aa).

3 residues coordinate 3-phosphoshikimate: Lys-22, Ser-23, and Arg-27. A phosphoenolpyruvate-binding site is contributed by Lys-22. The phosphoenolpyruvate site is built by Gly-96 and Arg-124. Residues Ser-169, Ser-170, Gln-171, Ser-197, Asp-313, Asn-336, and Lys-340 each coordinate 3-phosphoshikimate. Residue Gln-171 participates in phosphoenolpyruvate binding. The active-site Proton acceptor is Asp-313. Phosphoenolpyruvate contacts are provided by Arg-344, Arg-386, and Lys-411.

This sequence belongs to the EPSP synthase family. In terms of assembly, monomer.

The protein resides in the cytoplasm. The enzyme catalyses 3-phosphoshikimate + phosphoenolpyruvate = 5-O-(1-carboxyvinyl)-3-phosphoshikimate + phosphate. It participates in metabolic intermediate biosynthesis; chorismate biosynthesis; chorismate from D-erythrose 4-phosphate and phosphoenolpyruvate: step 6/7. Functionally, catalyzes the transfer of the enolpyruvyl moiety of phosphoenolpyruvate (PEP) to the 5-hydroxyl of shikimate-3-phosphate (S3P) to produce enolpyruvyl shikimate-3-phosphate and inorganic phosphate. The polypeptide is 3-phosphoshikimate 1-carboxyvinyltransferase (Salmonella newport (strain SL254)).